The following is an 86-amino-acid chain: Large ribosomal subunit protein bL27 (86 aa).

The interval 1 to 22 (MAHKKAGGSTRNGRDSESKRLG) is disordered.

This sequence belongs to the bacterial ribosomal protein bL27 family.

The polypeptide is Large ribosomal subunit protein bL27 (Vibrio cholerae serotype O1 (strain ATCC 39315 / El Tor Inaba N16961)).